The sequence spans 1077 residues: Teashirt homolog 1-B (1077 aa).

Disordered regions lie at residues 1–110 (MPRR…NASY) and 142–179 (NEKA…SCTN). Residues 26 to 36 (TEEDNLEDDGL) show a composition bias toward acidic residues. Over residues 56–69 (TQSYQNSPISSATN) the composition is skewed to polar residues. Over residues 160–179 (SGPTSDPGTPTTITSSSCTN) the composition is skewed to low complexity. The C2H2-type 1 zinc-finger motif lies at 248–272 (FRCKDCSAAYDTLVELTVHMNETGH). Residues 274–286 (RDDNRDREAERTK) show a composition bias toward basic and acidic residues. A disordered region spans residues 274-300 (RDDNRDREAERTKRWSKPRKRSLMEME). The C2H2-type 2 zinc finger occupies 309 to 333 (LKCMYCGHSFESLQDLSVHMIKTKH). Residues 362–394 (ALPDSPEQAGISPGASVSESAKDPKAANPYVTP) form a disordered region. The segment at 418-442 (LKCMECGSSHDTLQQLTAHMMVTGH) adopts a C2H2-type 3 zinc-finger fold. Disordered regions lie at residues 473–530 (PPTT…KIEP) and 849–873 (GRLT…SSFE). Residues 497–529 (HSEEKKDPEKEKVNIGEVEKKIKEENEDPEKIE) are compositionally biased toward basic and acidic residues. The segment covering 853 to 862 (PKSSTPSTVS) has biased composition (polar residues). Residues 885-955 (RKGRQSNWNP…NVKYQLRRTG (71 aa)) constitute a DNA-binding region (homeobox). 2 C2H2-type zinc fingers span residues 970 to 992 (FFCN…LETH) and 1037 to 1060 (FQCK…SKTH).

It belongs to the teashirt C2H2-type zinc-finger protein family.

It is found in the nucleus. Its function is as follows. Probable transcriptional regulator involved in developmental processes. May act as a transcriptional repressor (Potential). Involved in two major neuronal regionalization processes: primary anteroposterior (AP) axis patterning of the CNS and segmentation of the cranial neuronal crest (CNS) development. The polypeptide is Teashirt homolog 1-B (tshz1-b) (Xenopus laevis (African clawed frog)).